A 124-amino-acid chain; its full sequence is Small ribosomal subunit protein uS12 (124 aa).

The segment at 1 to 24 (MPTINQLVRRPRKPSVSANKAPAL) is disordered. At D90 the chain carries 3-methylthioaspartic acid.

Belongs to the universal ribosomal protein uS12 family. As to quaternary structure, part of the 30S ribosomal subunit. Contacts proteins S8 and S17. May interact with IF1 in the 30S initiation complex.

With S4 and S5 plays an important role in translational accuracy. Its function is as follows. Interacts with and stabilizes bases of the 16S rRNA that are involved in tRNA selection in the A site and with the mRNA backbone. Located at the interface of the 30S and 50S subunits, it traverses the body of the 30S subunit contacting proteins on the other side and probably holding the rRNA structure together. The combined cluster of proteins S8, S12 and S17 appears to hold together the shoulder and platform of the 30S subunit. The chain is Small ribosomal subunit protein uS12 from Anaplasma phagocytophilum (strain HZ).